Reading from the N-terminus, the 820-residue chain is TORTIFOLIA1-like protein 2 (820 aa).

5 HEAT repeats span residues 61–98, 102–139, 146–183, 187–224, and 228–265; these read DKVS…FHEG, PYLG…KMSC, GVFV…SSPE, AIIQ…AGGA, and SVLS…TGEK. Over residues 304–321 the composition is skewed to low complexity; that stretch reads PGSDSPEPSETESSVKES. Disordered stretches follow at residues 304-325, 357-377, and 584-644; these read PGSD…YNGA, PVSA…SNQD, and GSTI…GKTG. Residues 367 to 377 show a composition bias toward basic and acidic residues; the sequence is YNDDPRKSNQD. The segment covering 584–613 has biased composition (polar residues); it reads GSTISPRLSSCTSRTSTDIRNRQSTLSTSK.

The protein is TORTIFOLIA1-like protein 2 of Arabidopsis thaliana (Mouse-ear cress).